The following is a 382-amino-acid chain: p21-activated protein kinase-interacting protein 1 (382 aa).

5 WD repeats span residues threonine 37–alanine 77, histidine 80–lysine 120, histidine 122–isoleucine 160, threonine 202–glutamate 240, and alanine 243–proline 284. Residues leucine 313–methionine 382 are disordered. A compositionally biased stretch (polar residues) spans aspartate 352–valine 363. Positions alanine 365–methionine 382 are enriched in basic residues.

As to quaternary structure, interacts with PAK1.

Its subcellular location is the nucleus. The protein localises to the nucleolus. In terms of biological role, negatively regulates the PAK1 kinase. PAK1 is a member of the PAK kinase family, which has been shown to play a positive role in the regulation of signaling pathways involving MAPK8 and RELA. PAK1 exists as an inactive homodimer, which is activated by binding of small GTPases such as CDC42 to an N-terminal regulatory domain. PAK1IP1 also binds to the N-terminus of PAK1, and inhibits the specific activation of PAK1 by CDC42. May be involved in ribosomal large subunit assembly. This is p21-activated protein kinase-interacting protein 1 (Pak1ip1) from Mus musculus (Mouse).